The sequence spans 337 residues: Cytoskeleton protein RodZ (337 aa).

Over 1-111 (MNTEATHDQN…LGKRRKKRDG (111 aa)) the chain is Cytoplasmic. The HTH cro/C1-type domain occupies 19–71 (LRNAREQLGLSQQAVAERLCLKVSTVRDIEEDKAPADLASTFLRGYIRSYARL). The segment at residues 30-49 (QQAVAERLCLKVSTVRDIEE) is a DNA-binding region (H-T-H motif). The chain crosses the membrane as a helical; Signal-anchor for type II membrane protein span at residues 112 to 132 (WLMTFTWLVLFVVVGLTGAWW). Residues 133–337 (WQNHKAQQEE…TLNAEQSPAQ (205 aa)) lie on the Periplasmic side of the membrane. A disordered region spans residues 155 to 220 (NAGGDSAQSV…QNAVVAPSQA (66 aa)). Polar residues predominate over residues 160 to 192 (SAQSVPLDTSEAASQDSTPAPTAPVDSTATNAV). Over residues 193–217 (PQTPDASATTTAPAADAQQNAVVAP) the composition is skewed to low complexity.

The protein belongs to the RodZ family.

Its subcellular location is the cell inner membrane. In terms of biological role, cytoskeletal protein that is involved in cell-shape control through regulation of the length of the long axis. The polypeptide is Cytoskeleton protein RodZ (Citrobacter koseri (strain ATCC BAA-895 / CDC 4225-83 / SGSC4696)).